The following is a 290-amino-acid chain: Cilia- and flagella-associated protein 298 (290 aa).

This sequence belongs to the CFAP298 family. Interacts with ZMYND10. Expressed in the trachea (at protein level).

The protein resides in the cytoplasm. It localises to the cytoskeleton. It is found in the cilium basal body. Its function is as follows. Plays a role in motile cilium function, possibly by acting on outer dynein arm assembly. Seems to be important for initiation rather than maintenance of cilium motility. Required for correct positioning of cilia at the apical cell surface, suggesting an additional role in the planar cell polarity (PCP) pathway. May suppress canonical Wnt signaling activity. The polypeptide is Cilia- and flagella-associated protein 298 (Rattus norvegicus (Rat)).